Here is a 98-residue protein sequence, read N- to C-terminus: MDARDIILRPVVTEKSMNLMDDKKYTFDVLVSATKTQVRNAVEEIFDVKVKNVNIMNVRGKEKRVGRYTGKTARRRKAIVTLTEDSNDIKIFNDNKEN.

It belongs to the universal ribosomal protein uL23 family. In terms of assembly, part of the 50S ribosomal subunit. Contacts protein L29, and trigger factor when it is bound to the ribosome.

One of the early assembly proteins it binds 23S rRNA. One of the proteins that surrounds the polypeptide exit tunnel on the outside of the ribosome. Forms the main docking site for trigger factor binding to the ribosome. The sequence is that of Large ribosomal subunit protein uL23 from Lactobacillus gasseri (strain ATCC 33323 / DSM 20243 / BCRC 14619 / CIP 102991 / JCM 1131 / KCTC 3163 / NCIMB 11718 / NCTC 13722 / AM63).